Reading from the N-terminus, the 186-residue chain is T-cell receptor-associated transmembrane adapter 1 (186 aa).

The Extracellular portion of the chain corresponds to 1-7 (MSGISGC). Residues 8 to 28 (PFFLWGLLALLGLALVISLIF) traverse the membrane as a helical; Signal-anchor for type III membrane protein segment. The Cytoplasmic portion of the chain corresponds to 29-186 (NISHYVEKQR…LIRAKREPIN (158 aa)). Ser46 is modified (phosphoserine). Tyr79 is subject to Phosphotyrosine. The segment at 79–82 (YEQM) is interaction with PIK3R1. Residues 116-140 (SVKGKRRKPRKQNTHFSDKDGDEQL) form a disordered region. The span at 118-128 (KGKRRKPRKQN) shows a compositional bias: basic residues. A compositionally biased stretch (basic and acidic residues) spans 131–140 (FSDKDGDEQL).

Homodimer; disulfide-linked. Interacts with CD3Z. When phosphorylated, interacts with PIK3R1. In terms of processing, phosphorylated on tyrosines by LCK or FYN upon TCR activation. As to expression, strongly expressed in thymus, and to a lesser extent in spleen, lymph node and peripheral blood lymphocytes. Present in T-cells and NK cells, but not B-cells (at protein level).

Its subcellular location is the cell membrane. Stabilizes the TCR (T-cell antigen receptor)/CD3 complex at the surface of T-cells. This Homo sapiens (Human) protein is T-cell receptor-associated transmembrane adapter 1 (TRAT1).